Consider the following 780-residue polypeptide: Aconitate hydratase, mitochondrial (780 aa).

Residues 1 to 27 constitute a mitochondrion transit peptide; sequence MAPYSLLVTRLQKALGVRQYHVASVLC. Residue K31 is modified to N6-succinyllysine. At K50 the chain carries N6-acetyllysine; alternate. K50 is modified (N6-succinyllysine; alternate). Q99 contributes to the substrate binding site. N6-acetyllysine; alternate occurs at positions 138 and 144. N6-succinyllysine; alternate is present on residues K138 and K144. 192–194 contacts substrate; that stretch reads DSH. K233 carries the post-translational modification N6-acetyllysine; alternate. The residue at position 233 (K233) is an N6-succinyllysine; alternate. C385 is a binding site for [4Fe-4S] cluster. K411 bears the N6-succinyllysine mark. Residues C448 and C451 each coordinate [4Fe-4S] cluster. Residues R474 and R479 each coordinate substrate. N6-acetyllysine; alternate is present on residues K517 and K523. 2 positions are modified to N6-succinyllysine; alternate: K517 and K523. Residues 524-537 show a composition bias toward basic and acidic residues; the sequence is LEAPDADELPRSDF. The tract at residues 524 to 560 is disordered; sequence LEAPDADELPRSDFDPGQDTYQHPPKDSSGQRVDVSP. Position 549 is an N6-succinyllysine (K549). Residues 551-560 show a composition bias toward polar residues; the sequence is SSGQRVDVSP. S559 is modified (phosphoserine). An N6-acetyllysine; alternate modification is found at K573. K573 bears the N6-succinyllysine; alternate mark. Residues K577 and K591 each carry the N6-succinyllysine modification. An N6-acetyllysine; alternate modification is found at K605. K605 bears the N6-succinyllysine; alternate mark. Residue R607 coordinates substrate. An N6-succinyllysine modification is found at K628. Phosphoserine is present on S670. Substrate is bound at residue 670 to 671; sequence SR. K689 is subject to N6-succinyllysine. 2 positions are modified to N6-acetyllysine; alternate: K723 and K730. An N6-succinyllysine; alternate mark is found at K723 and K730. 3 positions are modified to N6-acetyllysine: K736, K739, and K743.

It belongs to the aconitase/IPM isomerase family. As to quaternary structure, monomer. [4Fe-4S] cluster serves as cofactor. In terms of processing, forms covalent cross-links mediated by transglutaminase TGM2, between a glutamine and the epsilon-amino group of a lysine residue, forming homopolymers and heteropolymers.

The protein resides in the mitochondrion. It catalyses the reaction citrate = D-threo-isocitrate. It participates in carbohydrate metabolism; tricarboxylic acid cycle; isocitrate from oxaloacetate: step 2/2. Its function is as follows. Catalyzes the isomerization of citrate to isocitrate via cis-aconitate. In Mus musculus (Mouse), this protein is Aconitate hydratase, mitochondrial (Aco2).